We begin with the raw amino-acid sequence, 239 residues long: Homeobox-leucine zipper protein HOX12 (239 aa).

The tract at residues Pro22–Leu65 is disordered. The segment at residues Glu58–Leu117 is a DNA-binding region (homeobox). Positions Gln107–Thr168 form a coiled coil.

The protein belongs to the HD-ZIP homeobox family. Class I subfamily. Expressed in seedlings, roots, stems, leaf sheaths and panicles.

It is found in the nucleus. Functionally, probable transcription factor. In Oryza sativa subsp. indica (Rice), this protein is Homeobox-leucine zipper protein HOX12 (HOX12).